The primary structure comprises 617 residues: Ceramide transfer protein (617 aa).

Over residues 1–11 the composition is skewed to polar residues; that stretch reads MSDNQSWNSSG. Residues 1–23 form a disordered region; that stretch reads MSDNQSWNSSGSEEDLETESGPP. Residues 23-117 enclose the PH domain; sequence PVERCGVLSK…WIDSIEQHKS (95 aa). The stretch at 268–302 forms a coiled coil; the sequence is REDSWQKRLDKEIEKRRRVEEAYKNAMTELKKKSH. An FFAT motif is present at residues 320–326; the sequence is EFFDAVE. Residues 332–344 are compositionally biased toward basic and acidic residues; that stretch reads QDKIEQSQSEKGR. Residues 332–355 form a disordered region; that stretch reads QDKIEQSQSEKGRSHWPSSLPSTE. In terms of domain architecture, START spans 383 to 611; sequence DEHRFRIQVE…FTSYVQEKTA (229 aa). Positions 466, 487, 524, and 572 each coordinate an N-acylsphing-4-enine.

The protein localises to the cytoplasm. Its subcellular location is the golgi apparatus. It localises to the endoplasmic reticulum. It carries out the reaction N-hexadecanoylsphing-4-enine(in) = N-hexadecanoylsphing-4-enine(out). Its function is as follows. May mediate the intracellular trafficking of ceramide in a non-vesicular manner. This Xenopus tropicalis (Western clawed frog) protein is Ceramide transfer protein (cert1).